The primary structure comprises 712 residues: Phosphatase and actin regulator 4 (712 aa).

2 disordered regions span residues 1–22 (MGQA…GQPT) and 90–405 (RGLL…EVPK). The RPEL 1 repeat unit spans residues 72–97 (EVLERKISMRKPREELVKRGLLLEDS). The segment covering 114-124 (NGHTTLIGSTR) has biased composition (polar residues). S125, S127, S140, and S156 each carry phosphoserine. Basic and acidic residues predominate over residues 136–152 (ERIASLRKPVPEEEPKK). The span at 198 to 230 (ATSSGSLARPSSSASTTAITTAPAATMAATNPA) shows a compositional bias: low complexity. The span at 233 to 243 (VHSSGPPSQAP) shows a compositional bias: polar residues. The span at 245–267 (TLPAAPASTHTTATLSLTHTGPA) shows a compositional bias: low complexity. Residues S282, S303, and S353 each carry the phosphoserine modification. Residues 345–357 (SEPLLTPSSSPLP) show a composition bias toward low complexity. Over residues 358–371 (AHIPPEPPQSPPFP) the composition is skewed to pro residues. A Phosphoserine modification is found at S436. T441 carries the post-translational modification Phosphothreonine. 7 positions are modified to phosphoserine: S452, S462, S473, S524, S526, S567, and S600. The disordered stretch occupies residues 507–557 (VIPKLPQCLQEEEEGKESDSDSEGPIQYRDEEDEDESHHSALANKVKRKDT). Positions 516–528 (QEEEEGKESDSDS) are enriched in acidic residues. RPEL repeat units follow at residues 593-618 (NTLI…QPKN) and 631-656 (RRLT…RFNE). Residues 602–626 (RPTPEELEQRNILQPKNEADRQAEK) form a disordered region. S638 carries the post-translational modification Phosphoserine.

Belongs to the phosphatase and actin regulator family. As to quaternary structure, binds PPP1CA and actin.

It is found in the cytoplasm. It localises to the cell projection. The protein resides in the lamellipodium. Functionally, regulator of protein phosphatase 1 (PP1) required for neural tube and optic fissure closure, and enteric neural crest cell (ENCCs) migration during development. Acts as an activator of PP1 by interacting with PPP1CA and preventing phosphorylation of PPP1CA at 'Thr-320'. During neural tube closure, localizes to the ventral neural tube and activates PP1, leading to down-regulate cell proliferation within cranial neural tissue and the neural retina. Also acts as a regulator of migration of enteric neural crest cells (ENCCs) by activating PP1, leading to dephosphorylation and subsequent activation of cofilin (COF1 or COF2) and repression of the integrin signaling through the RHO/ROCK pathway. The protein is Phosphatase and actin regulator 4 (PHACTR4) of Bos taurus (Bovine).